The sequence spans 863 residues: Leucine--tRNA ligase (863 aa).

Residues 42-52 (PYPSGRLHMGH) carry the 'HIGH' region motif. The 'KMSKS' region motif lies at 622-626 (KMSKS). Lys-625 contributes to the ATP binding site.

It belongs to the class-I aminoacyl-tRNA synthetase family.

Its subcellular location is the cytoplasm. The catalysed reaction is tRNA(Leu) + L-leucine + ATP = L-leucyl-tRNA(Leu) + AMP + diphosphate. This Shewanella sediminis (strain HAW-EB3) protein is Leucine--tRNA ligase.